A 559-amino-acid polypeptide reads, in one-letter code: 2-isopropylmalate synthase (559 aa).

The Pyruvate carboxyltransferase domain maps to 30–304; the sequence is PLWAAVDLRD…DPGIDFSRMK (275 aa). 4 residues coordinate Mg(2+): Asp-39, His-243, His-245, and Asn-279. A regulatory domain region spans residues 436 to 559; it reads VPMGWVLRSY…ETSEQLIANS (124 aa).

It belongs to the alpha-IPM synthase/homocitrate synthase family. LeuA type 2 subfamily. Homodimer. It depends on Mg(2+) as a cofactor.

It localises to the cytoplasm. The enzyme catalyses 3-methyl-2-oxobutanoate + acetyl-CoA + H2O = (2S)-2-isopropylmalate + CoA + H(+). Its pathway is amino-acid biosynthesis; L-leucine biosynthesis; L-leucine from 3-methyl-2-oxobutanoate: step 1/4. Its function is as follows. Catalyzes the condensation of the acetyl group of acetyl-CoA with 3-methyl-2-oxobutanoate (2-ketoisovalerate) to form 3-carboxy-3-hydroxy-4-methylpentanoate (2-isopropylmalate). This Alcanivorax borkumensis (strain ATCC 700651 / DSM 11573 / NCIMB 13689 / SK2) protein is 2-isopropylmalate synthase.